The following is a 765-amino-acid chain: MLVQDRVAPKPPKSRIRELPSRDRFAEPKILDFSSWVSDNVYRIVIIFLFIVTVAAFFFLYNTTDTASLLCFQSQSTQSLQSLTRPQINWNSIQIVSDKTSPYASFRTEKWIVVSVTKHPTEELKGLVKIKGWQVLAIGNSLTPKDWNLKGAIFLSLDAQAELNYRILDHLPYDSFVRKSVGYLFAIQHGAKKIFDADDRGEVIDGDLGKHFDVELVGEDARQEPILQYSHENPNRTVVNPYIHFGQRSVWPRGLPLENVGEINHEEYYTEVFGGKQFIQQGISNGLPDVDSVYYSTRKTTFEPFDIRFDEHSPKVALPQGMMVPVNSFNTLYHSSAFWGLMLPVSVSSMASDVIRGYWGQRLLWELGGYVAVYPPTVHRYDRVEAYPFSDEKDLHINVGRLIKFLLAWRSNKHRFFETILDLSFVMAEQGFWTELDVKFTAAWLQDLLMVGYQQPRLMSLELDRPRATIGHGDRKEFVPRKLPSVHLGVEEIGTVSSEIGNLIKWRKNFGNVVLIMFCNGPVERTALEWRLLYGRIFKTVVILSSRKNSDLYVQEAKLDHIYKRLPKIFDRYSSADGFVFVEDDTVLNYWNLLQADKTKLWTTDKVTESWTTVRPAGNSDWYSVQAELVKKIVSTMPVHFQVNYKEATKNSDGTSLTMCSSEVFYVPKRFVSDFTDLVNLVGDMDLHYKVAVPMFFLSMDSPQNFDPVLGSMVYKSEPASLNSSLSLYSAEAPAVHPWSISNEQDFIKLVREMAEGDPLLMELV.

Topologically, residues 1-43 are cytoplasmic; it reads MLVQDRVAPKPPKSRIRELPSRDRFAEPKILDFSSWVSDNVYR. Residues 44 to 64 form a helical membrane-spanning segment; the sequence is IVIIFLFIVTVAAFFFLYNTT. Residues 65-765 are Lumenal-facing; the sequence is DTASLLCFQS…EGDPLLMELV (701 aa). Residues Asn-235 and Asn-723 are each glycosylated (N-linked (GlcNAc...) asparagine).

The protein belongs to the STELLO family. Homo- and heterodimer with STL1. Interacts with CESA1, CESA3, CESA4, CESA6, CESA7 and CESA8, but not with GOT1. Expressed in cells that are expanding or producing secondary cell walls.

Its subcellular location is the golgi apparatus membrane. In terms of biological role, probable glycosyltransferase regulating the assembly and trafficking of cellulose synthase complexes. The protein is Probable glycosyltransferase STELLO2 of Arabidopsis thaliana (Mouse-ear cress).